The sequence spans 375 residues: MHCPVIELAQQLIRRPSLSPDDAGCQAILIARLQALGFTIETMNIGDTLNFWAWRGKGETLAFAGHTDVVPTGDVTRWNNPPFEPTIRDGMLYGRGAADMKGSLAAMVVAAERFVANYPQHEGRLAFLITSDEEASATNGTVKVVEALMARHERLDYCLVGEPSSTEVVGDVAKNGRRGSITANLTIHGVQGHVAYPHLADNPVHRAMPALNELVATEWDKGNEFFPPTSMQIANVQAGTGSNNVIPGDCFVQFNFRFSTELTDVMIQQKVQALLERHQLRYSIEWKLSGQPFLTSRGKLVDAVVNAVEHYNEIRPQLLTTGGTSDGRFIARMGAQVVELGPVNATIHKVDECVKAADLQLLSRMYQRIMEQLVA.

A Zn(2+)-binding site is contributed by histidine 66. Aspartate 68 is a catalytic residue. Aspartate 99 serves as a coordination point for Zn(2+). Glutamate 133 serves as the catalytic Proton acceptor. Glutamate 134, glutamate 162, and histidine 348 together coordinate Zn(2+).

Belongs to the peptidase M20A family. DapE subfamily. As to quaternary structure, homodimer. It depends on Zn(2+) as a cofactor. The cofactor is Co(2+).

The catalysed reaction is N-succinyl-(2S,6S)-2,6-diaminopimelate + H2O = (2S,6S)-2,6-diaminopimelate + succinate. The protein operates within amino-acid biosynthesis; L-lysine biosynthesis via DAP pathway; LL-2,6-diaminopimelate from (S)-tetrahydrodipicolinate (succinylase route): step 3/3. Functionally, catalyzes the hydrolysis of N-succinyl-L,L-diaminopimelic acid (SDAP), forming succinate and LL-2,6-diaminopimelate (DAP), an intermediate involved in the bacterial biosynthesis of lysine and meso-diaminopimelic acid, an essential component of bacterial cell walls. This is Succinyl-diaminopimelate desuccinylase from Erwinia tasmaniensis (strain DSM 17950 / CFBP 7177 / CIP 109463 / NCPPB 4357 / Et1/99).